The chain runs to 429 residues: Neuronal pentraxin-2 (429 aa).

A signal peptide spans 1-14; that stretch reads MLALLTVGVALAVA. 2 N-linked (GlcNAc...) asparagine glycosylation sites follow: Asn146 and Asn187. Residues 221 to 422 form the Pentraxin (PTX) domain; it reads DAFKVSLPLR…GASKWPVETC (202 aa). Cys251 and Cys311 form a disulfide bridge. Positions 275, 353, 354, 355, and 365 each coordinate Ca(2+). Asn391 carries an N-linked (GlcNAc...) asparagine glycan.

Homooligomer or heterooligomer (probably pentamer) with neuronal pentraxin receptor (NPTXR). Ca(2+) serves as cofactor.

It is found in the secreted. Functionally, likely to play role in the modification of cellular properties that underlie long-term plasticity. Binds to agar matrix in a calcium-dependent manner. The chain is Neuronal pentraxin-2 (Nptx2) from Mus musculus (Mouse).